A 574-amino-acid chain; its full sequence is Putative dehydratase IlvD1 (574 aa).

The [4Fe-4S] cluster site is built by cysteine 124 and cysteine 197.

This sequence belongs to the IlvD/Edd family. It depends on [4Fe-4S] cluster as a cofactor.

In terms of biological role, involved in the degradation of galactose via the DeLey-Doudoroff pathway. The chain is Putative dehydratase IlvD1 (ilvD1) from Rhizobium meliloti (strain 1021) (Ensifer meliloti).